The chain runs to 504 residues: Maturase K (504 aa).

Belongs to the intron maturase 2 family. MatK subfamily.

Its subcellular location is the plastid. It localises to the chloroplast. Functionally, usually encoded in the trnK tRNA gene intron. Probably assists in splicing its own and other chloroplast group II introns. The polypeptide is Maturase K (Simmondsia chinensis (Jojoba)).